Here is a 536-residue protein sequence, read N- to C-terminus: Phosphoenolpyruvate carboxykinase (ATP) (536 aa).

Substrate-binding residues include Arg-61, Tyr-195, and Lys-201. ATP is bound by residues Lys-201, His-220, and 236 to 244 (GLSGTGKTT). 2 residues coordinate Mn(2+): Lys-201 and His-220. Mn(2+) is bound at residue Asp-257. ATP-binding residues include Glu-285, Arg-322, and Thr-447. Arg-322 serves as a coordination point for substrate.

It belongs to the phosphoenolpyruvate carboxykinase (ATP) family. Mn(2+) is required as a cofactor.

It is found in the cytoplasm. It catalyses the reaction oxaloacetate + ATP = phosphoenolpyruvate + ADP + CO2. It functions in the pathway carbohydrate biosynthesis; gluconeogenesis. Involved in the gluconeogenesis. Catalyzes the conversion of oxaloacetate (OAA) to phosphoenolpyruvate (PEP) through direct phosphoryl transfer between the nucleoside triphosphate and OAA. The polypeptide is Phosphoenolpyruvate carboxykinase (ATP) (Sinorhizobium medicae (strain WSM419) (Ensifer medicae)).